The primary structure comprises 261 residues: Chloroplastic import inner membrane translocase subunit HP30-1 (261 aa).

4 helical membrane-spanning segments follow: residues 59–77 (AAVV…GGLM), 113–129 (NFAA…SVMK), 139–155 (SAVV…SLVS), and 163–180 (MNAI…GVFF).

This sequence belongs to the Tim17/Tim22/Tim23 family. Probable component of a protein-conducting channel made of HP30-1, HP30-2 and HP20 that mediates the import of transit sequence-less proteins into the chloroplastic inner membrane. Interacts with CEQORH.

It localises to the plastid. Its subcellular location is the chloroplast inner membrane. Together with HP30-2 and HP20, triggers the import and insertion of transit sequence-less multi-pass transmembrane proteins (e.g. CEQORH) into the chloroplastic inner membrane. In Arabidopsis thaliana (Mouse-ear cress), this protein is Chloroplastic import inner membrane translocase subunit HP30-1.